The sequence spans 329 residues: Beta-ketoacyl-[acyl-carrier-protein] synthase III (329 aa).

Active-site residues include cysteine 112 and histidine 253. Positions glutamine 254–arginine 258 are ACP-binding. Asparagine 283 is a catalytic residue.

This sequence belongs to the thiolase-like superfamily. FabH family. In terms of assembly, homodimer.

The protein resides in the cytoplasm. It carries out the reaction malonyl-[ACP] + acetyl-CoA + H(+) = 3-oxobutanoyl-[ACP] + CO2 + CoA. The protein operates within lipid metabolism; fatty acid biosynthesis. In terms of biological role, catalyzes the condensation reaction of fatty acid synthesis by the addition to an acyl acceptor of two carbons from malonyl-ACP. Catalyzes the first condensation reaction which initiates fatty acid synthesis and may therefore play a role in governing the total rate of fatty acid production. Possesses both acetoacetyl-ACP synthase and acetyl transacylase activities. Its substrate specificity determines the biosynthesis of branched-chain and/or straight-chain of fatty acids. The protein is Beta-ketoacyl-[acyl-carrier-protein] synthase III of Gloeobacter violaceus (strain ATCC 29082 / PCC 7421).